A 144-amino-acid polypeptide reads, in one-letter code: Large ribosomal subunit protein uL15 (144 aa).

The segment at 1-57 is disordered; that stretch reads MRLNTLSPAPGSKPSAKRVGRGIGSGLGKTCGRGHKGQKSRSGGSVRPGFEGGQMPL. The span at 21–31 shows a compositional bias: gly residues; the sequence is RGIGSGLGKTC.

Belongs to the universal ribosomal protein uL15 family. As to quaternary structure, part of the 50S ribosomal subunit.

Binds to the 23S rRNA. This is Large ribosomal subunit protein uL15 from Photobacterium profundum (strain SS9).